The primary structure comprises 327 residues: PDZ and LIM domain protein 1 (327 aa).

Residue Thr-2 is modified to N-acetylthreonine. Residues 3–85 (TQQIVLQGPG…NMTLTVSRSE (83 aa)) form the PDZ domain. Phosphoserine is present on residues Ser-90 and Ser-130. Phosphotyrosine is present on Tyr-142. The disordered stretch occupies residues 161-186 (VESKTSASGEEANSRPSAQPHPSGGL). Residues 256–315 (PICDKCGTGIVGVFVKLRDHHRHPECYVCTDCGINLKQKGHFFVGDQIYCEKHARERVTP) enclose the LIM zinc-binding domain. Residues Cys-258, Cys-261, His-278, Cys-281, Cys-284, Cys-287, Cys-305, and His-308 each coordinate Zn(2+). Thr-314 is subject to Phosphothreonine. Position 319 is a phosphotyrosine (Tyr-319).

Interacts with ACTN1. Interacts with ACTN2 and ACTN4. Interacts with PDLIM4. As to expression, expressed most abundantly in heart, lung and liver, moderately in spleen and skeletal muscle, and at extremely low levels (if at all) in testis and brain tissues.

It is found in the cytoplasm. It localises to the cytoskeleton. The protein localises to the myofibril. Its subcellular location is the sarcomere. The protein resides in the z line. In terms of biological role, cytoskeletal protein that may act as an adapter that brings other proteins (like kinases) to the cytoskeleton. Involved in assembly, disassembly and directioning of stress fibers in fibroblasts. Required for the localization of ACTN1 and PALLD to stress fibers. Required for cell migration and in maintaining cell polarity of fibroblasts. In Rattus norvegicus (Rat), this protein is PDZ and LIM domain protein 1 (Pdlim1).